Consider the following 145-residue polypeptide: uncharacterized protein (145 aa).

Disordered stretches follow at residues 1–41 (MRRL…PPGT) and 122–145 (RLPS…PLAL). The segment covering 20–34 (GGPQNGTSGCTTAPQ) has biased composition (polar residues). Residues 134-145 (DSQHPREVPLAL) are compositionally biased toward basic and acidic residues.

In terms of tissue distribution, ubiquitous.

This is an uncharacterized protein from Homo sapiens (Human).